Consider the following 507-residue polypeptide: ATP synthase subunit alpha, chloroplastic (507 aa).

170–177 provides a ligand contact to ATP; it reads GDRQTGKT.

It belongs to the ATPase alpha/beta chains family. As to quaternary structure, F-type ATPases have 2 components, CF(1) - the catalytic core - and CF(0) - the membrane proton channel. CF(1) has five subunits: alpha(3), beta(3), gamma(1), delta(1), epsilon(1). CF(0) has four main subunits: a, b, b' and c.

The protein localises to the plastid. It is found in the chloroplast thylakoid membrane. The catalysed reaction is ATP + H2O + 4 H(+)(in) = ADP + phosphate + 5 H(+)(out). Its function is as follows. Produces ATP from ADP in the presence of a proton gradient across the membrane. The alpha chain is a regulatory subunit. This chain is ATP synthase subunit alpha, chloroplastic, found in Manihot esculenta (Cassava).